We begin with the raw amino-acid sequence, 445 residues long: Argininosuccinate synthase (445 aa).

Residues 17–25 (AFSGGLDTS) and Ala-43 each bind ATP. L-citrulline is bound at residue Tyr-99. ATP-binding residues include Gly-129 and Thr-131. L-aspartate is bound by residues Thr-131, Asn-135, and Asp-136. Asn-135 is an L-citrulline binding site. An ATP-binding site is contributed by Asp-136. Residues Arg-139 and Ser-192 each coordinate L-citrulline. Position 194 (Asp-194) interacts with ATP. L-citrulline contacts are provided by Thr-201, Glu-203, and Glu-280.

The protein belongs to the argininosuccinate synthase family. Type 2 subfamily. Homotetramer.

It localises to the cytoplasm. The enzyme catalyses L-citrulline + L-aspartate + ATP = 2-(N(omega)-L-arginino)succinate + AMP + diphosphate + H(+). It functions in the pathway amino-acid biosynthesis; L-arginine biosynthesis; L-arginine from L-ornithine and carbamoyl phosphate: step 2/3. The polypeptide is Argininosuccinate synthase (Ralstonia pickettii (strain 12J)).